A 108-amino-acid polypeptide reads, in one-letter code: MVASCKDQKKAVAICLQRSPCVMIERHNPQECLDNPELNKDLPELCIAQMKAFLDCKRGIVDMTKRFTGNAPLSTGKYDQQYENLCKGKFDPREEMEKLKLLNSQQKD.

In terms of domain architecture, CHCH spans 18-64 (RSPCVMIERHNPQECLDNPELNKDLPELCIAQMKAFLDCKRGIVDMT). Positions 21 to 32 (CVMIERHNPQEC) match the Cx10C motif motif. 2 disulfides stabilise this stretch: Cys-21-Cys-56 and Cys-32-Cys-46. Positions 46-56 (CIAQMKAFLDC) match the Cx9C motif motif.

Belongs to the PET191 family.

It is found in the mitochondrion intermembrane space. Functionally, involved in the assembly of cytochrome c oxidase. This is Mitochondrial protein PET191 (PET191) from Saccharomyces cerevisiae (strain ATCC 204508 / S288c) (Baker's yeast).